Reading from the N-terminus, the 189-residue chain is UPF0301 protein PSEEN5058 (189 aa).

The protein belongs to the UPF0301 (AlgH) family.

The sequence is that of UPF0301 protein PSEEN5058 from Pseudomonas entomophila (strain L48).